The following is a 126-amino-acid chain: Large ribosomal subunit protein bL12 (126 aa).

The protein belongs to the bacterial ribosomal protein bL12 family. As to quaternary structure, homodimer. Part of the ribosomal stalk of the 50S ribosomal subunit. Forms a multimeric L10(L12)X complex, where L10 forms an elongated spine to which 2 to 4 L12 dimers bind in a sequential fashion. Binds GTP-bound translation factors.

Functionally, forms part of the ribosomal stalk which helps the ribosome interact with GTP-bound translation factors. Is thus essential for accurate translation. The chain is Large ribosomal subunit protein bL12 from Geotalea daltonii (strain DSM 22248 / JCM 15807 / FRC-32) (Geobacter daltonii).